Here is a 60-residue protein sequence, read N- to C-terminus: Large ribosomal subunit protein bL32 (60 aa).

This sequence belongs to the bacterial ribosomal protein bL32 family.

The sequence is that of Large ribosomal subunit protein bL32 from Borrelia hermsii (strain HS1 / DAH).